The sequence spans 238 residues: Dolichyldiphosphatase 1 (238 aa).

4 helical membrane-spanning segments follow: residues 33 to 53 (LAYLSLSPVFVIVGFVTLIIF), 100 to 120 (PSSHSQFMWFFSVYSFLFLYL), 130 to 150 (FLDLLWRHVLSLGLLAAAFLV), and 162 to 182 (WSQVLYGGIAGGLMAVAWFIF).

Belongs to the dolichyldiphosphatase family.

Its subcellular location is the endoplasmic reticulum membrane. The catalysed reaction is a di-trans,poly-cis-dolichyl diphosphate + H2O = a di-trans,poly-cis-dolichyl phosphate + phosphate + H(+). It participates in protein modification; protein glycosylation. Functionally, required for efficient N-glycosylation. Necessary for maintaining optimal levels of dolichol-linked oligosaccharides. Hydrolyzes dolichyl pyrophosphate at a very high rate and dolichyl monophosphate at a much lower rate. Does not act on phosphatidate. In Callithrix jacchus (White-tufted-ear marmoset), this protein is Dolichyldiphosphatase 1 (DOLPP1).